The primary structure comprises 194 residues: NADH-quinone oxidoreductase subunit B (194 aa).

Over residues Met-1–Val-11 the composition is skewed to pro residues. The disordered stretch occupies residues Met-1–Ile-24. The span at Gln-12–Ser-21 shows a compositional bias: low complexity. [4Fe-4S] cluster is bound by residues Cys-72, Cys-73, Cys-137, and Cys-167.

This sequence belongs to the complex I 20 kDa subunit family. NDH-1 is composed of 14 different subunits. Subunits NuoB, C, D, E, F, and G constitute the peripheral sector of the complex. Requires [4Fe-4S] cluster as cofactor.

The protein localises to the cell inner membrane. The enzyme catalyses a quinone + NADH + 5 H(+)(in) = a quinol + NAD(+) + 4 H(+)(out). In terms of biological role, NDH-1 shuttles electrons from NADH, via FMN and iron-sulfur (Fe-S) centers, to quinones in the respiratory chain. The immediate electron acceptor for the enzyme in this species is believed to be ubiquinone. Couples the redox reaction to proton translocation (for every two electrons transferred, four hydrogen ions are translocated across the cytoplasmic membrane), and thus conserves the redox energy in a proton gradient. The sequence is that of NADH-quinone oxidoreductase subunit B from Rhodospirillum centenum (strain ATCC 51521 / SW).